The chain runs to 270 residues: Pyrroline-5-carboxylate reductase (270 aa).

This sequence belongs to the pyrroline-5-carboxylate reductase family.

It is found in the cytoplasm. The catalysed reaction is L-proline + NADP(+) = (S)-1-pyrroline-5-carboxylate + NADPH + 2 H(+). It carries out the reaction L-proline + NAD(+) = (S)-1-pyrroline-5-carboxylate + NADH + 2 H(+). The protein operates within amino-acid biosynthesis; L-proline biosynthesis; L-proline from L-glutamate 5-semialdehyde: step 1/1. Its function is as follows. Catalyzes the reduction of 1-pyrroline-5-carboxylate (PCA) to L-proline. The polypeptide is Pyrroline-5-carboxylate reductase (Methanosarcina acetivorans (strain ATCC 35395 / DSM 2834 / JCM 12185 / C2A)).